Consider the following 196-residue polypeptide: MTPTLISAFLTYTLITALTPGPNNILALSSVTSHGLRRSLRVLAGMSVGFIITMLICAALTFSLVELDSRFTLVLGWIGAAYILWLAWQIAKSKPATGTPSVEPVGFWASLGLQFVNVKIILYGITALSTFVLPVTREPVWLISVSLLLAAIGALGNLCWALAGHLFQRLFLLYGRQLNWMLAALLVYCAVRIVVE.

Residues 1–21 (MTPTLISAFLTYTLITALTPG) traverse the membrane as a helical segment. The Cytoplasmic portion of the chain corresponds to 22 to 41 (PNNILALSSVTSHGLRRSLR). A helical transmembrane segment spans residues 42 to 62 (VLAGMSVGFIITMLICAALTF). The Periplasmic portion of the chain corresponds to 63–70 (SLVELDSR). Residues 71-91 (FTLVLGWIGAAYILWLAWQIA) traverse the membrane as a helical segment. The Cytoplasmic segment spans residues 92-114 (KSKPATGTPSVEPVGFWASLGLQ). The chain crosses the membrane as a helical span at residues 115-135 (FVNVKIILYGITALSTFVLPV). Residues 136 to 139 (TREP) are Periplasmic-facing. A helical membrane pass occupies residues 140–160 (VWLISVSLLLAAIGALGNLCW). Residues 161–170 (ALAGHLFQRL) lie on the Cytoplasmic side of the membrane. A helical transmembrane segment spans residues 171–191 (FLLYGRQLNWMLAALLVYCAV). At 192-196 (RIVVE) the chain is on the periplasmic side.

It belongs to the Rht family.

Its subcellular location is the cell inner membrane. It carries out the reaction O-acetyl-L-serine(in) = O-acetyl-L-serine(out). The enzyme catalyses L-cysteine(in) = L-cysteine(out). In terms of biological role, exporter of O-acetylserine (OAS) and cysteine. The chain is Cysteine/O-acetylserine efflux protein (eamB) from Klebsiella pneumoniae subsp. pneumoniae (strain ATCC 700721 / MGH 78578).